A 237-amino-acid chain; its full sequence is Lectin alpha chain (237 aa).

The Mn(2+) site is built by Glu-8 and Asp-10. Ca(2+) is bound by residues Asp-10, Tyr-12, Asn-14, and Asp-19. Tyr-12 contacts a carbohydrate. Mn(2+) contacts are provided by Asp-19 and His-24. A carbohydrate is bound at residue 99-100 (LY). Asp-208 contacts Ca(2+). Residue Arg-228 coordinates a carbohydrate.

This sequence belongs to the leguminous lectin family. As to quaternary structure, equilibrium between homodimer and homotetramer. Oligomerization is pH-dependent with homotetramers forming at pH 6.5 and above. Post-translationally, the beta and gamma chains are produced by partial proteolytic processing of the lectin alpha chain by an asparaginyl endopeptidase. Mixture of 60% alpha lectin and 40% of its beta and gamma proteolytic fragments. As to expression, seed.

Its subcellular location is the vacuole. It localises to the aleurone grain. Its function is as follows. D-mannose/D-glucose-binding lectin. Has anti-inflammatory activity in rats. Induces histamine release in mast cells from hamster and rat. Induces lymphocyte proliferation and IFNG production. Shows toxicity against the aquatic snail B.glabrata at concentrations higher than 20 ug/ml. The polypeptide is Lectin alpha chain (Dioclea virgata).